We begin with the raw amino-acid sequence, 290 residues long: Light-independent protochlorophyllide reductase iron-sulfur ATP-binding protein (290 aa).

Residues 10–15 (GIGKST) and K39 contribute to the ATP site. S14 is a Mg(2+) binding site. 2 residues coordinate [4Fe-4S] cluster: C95 and C129. ATP is bound at residue 180–181 (NR).

Belongs to the NifH/BchL/ChlL family. Homodimer. Protochlorophyllide reductase is composed of three subunits; ChlL, ChlN and ChlB. The cofactor is [4Fe-4S] cluster.

It localises to the plastid. The protein resides in the chloroplast. It catalyses the reaction chlorophyllide a + oxidized 2[4Fe-4S]-[ferredoxin] + 2 ADP + 2 phosphate = protochlorophyllide a + reduced 2[4Fe-4S]-[ferredoxin] + 2 ATP + 2 H2O. The protein operates within porphyrin-containing compound metabolism; chlorophyll biosynthesis (light-independent). Its function is as follows. Component of the dark-operative protochlorophyllide reductase (DPOR) that uses Mg-ATP and reduced ferredoxin to reduce ring D of protochlorophyllide (Pchlide) to form chlorophyllide a (Chlide). This reaction is light-independent. The L component serves as a unique electron donor to the NB-component of the complex, and binds Mg-ATP. This chain is Light-independent protochlorophyllide reductase iron-sulfur ATP-binding protein, found in Chaetosphaeridium globosum (Charophycean green alga).